The primary structure comprises 609 residues: 2',5'-phosphodiesterase 12 (609 aa).

The N-terminal 42 residues, 1–42 (MWRLPGARAALRVIRTAVEKLSRAEAGSQTAAGAMERAVVRC), are a transit peptide targeting the mitochondrion. Basic residues predominate over residues 89 to 99 (AAAAKKSRKSR). 2 disordered regions span residues 89–111 (AAAA…CSGP) and 206–230 (AEPE…ETDV). Low complexity-rich tracts occupy residues 100–111 (PNASGGAACSGP) and 213–224 (PSSLSPSSPSSS). Ser217 carries the phosphoserine modification. Glu351, Asp496, and Asn498 together coordinate Mg(2+). The active-site Proton donor/acceptor is Asp496.

It belongs to the CCR4/nocturin family. Mg(2+) is required as a cofactor. Ubiquitous.

The protein localises to the mitochondrion matrix. The enzyme catalyses Exonucleolytic cleavage of poly(A) to 5'-AMP.. Functionally, enzyme that cleaves 2',5'-phosphodiester bond linking adenosines of the 5'-triphosphorylated oligoadenylates, triphosphorylated oligoadenylates referred as 2-5A modulates the 2-5A system. Degrades triphosphorylated 2-5A to produce AMP and ATP. Also cleaves 3',5'-phosphodiester bond of oligoadenylates. Plays a role as a negative regulator of the 2-5A system that is one of the major pathways for antiviral and antitumor functions induced by interferons (IFNs). Suppression of this enzyme increases cellular 2-5A levels and decreases viral replication in cultured small-airway epithelial cells and Hela cells. This chain is 2',5'-phosphodiesterase 12 (PDE12), found in Homo sapiens (Human).